The chain runs to 41 residues: Sucrose porin (41 aa).

A signal peptide spans 1 to 22 (MYRKSTLAMLIALLTSAASAHA).

It belongs to the porin LamB (TC 1.B.3) family. As to quaternary structure, homotrimer.

The protein resides in the cell outer membrane. Its function is as follows. Porin for sucrose uptake. This chain is Sucrose porin (scrY), found in Salmonella thompson.